Here is a 117-residue protein sequence, read N- to C-terminus: Large ribosomal subunit protein bL19 (117 aa).

It belongs to the bacterial ribosomal protein bL19 family.

In terms of biological role, this protein is located at the 30S-50S ribosomal subunit interface and may play a role in the structure and function of the aminoacyl-tRNA binding site. This chain is Large ribosomal subunit protein bL19, found in Vesicomyosocius okutanii subsp. Calyptogena okutanii (strain HA).